The primary structure comprises 199 residues: FMN-dependent NADH:quinone oxidoreductase 2 (199 aa).

FMN is bound by residues serine 10, 16 to 18 (SVS), and 96 to 99 (MYNF).

Belongs to the azoreductase type 1 family. In terms of assembly, homodimer. The cofactor is FMN.

It catalyses the reaction 2 a quinone + NADH + H(+) = 2 a 1,4-benzosemiquinone + NAD(+). The enzyme catalyses N,N-dimethyl-1,4-phenylenediamine + anthranilate + 2 NAD(+) = 2-(4-dimethylaminophenyl)diazenylbenzoate + 2 NADH + 2 H(+). Quinone reductase that provides resistance to thiol-specific stress caused by electrophilic quinones. Its function is as follows. Also exhibits azoreductase activity. Catalyzes the reductive cleavage of the azo bond in aromatic azo compounds to the corresponding amines. The polypeptide is FMN-dependent NADH:quinone oxidoreductase 2 (Pseudomonas putida (strain ATCC 47054 / DSM 6125 / CFBP 8728 / NCIMB 11950 / KT2440)).